The chain runs to 238 residues: Probable transcriptional regulatory protein LACR_0237 (238 aa).

Belongs to the TACO1 family. YeeN subfamily.

It localises to the cytoplasm. The sequence is that of Probable transcriptional regulatory protein LACR_0237 from Lactococcus lactis subsp. cremoris (strain SK11).